A 301-amino-acid polypeptide reads, in one-letter code: Probable alpha-L-glutamate ligase 2 (301 aa).

In terms of domain architecture, ATP-grasp spans 104-287 (LQLLSRKGIG…VAEPIVEYIE (184 aa)). ATP-binding positions include lysine 141, 178–179 (EY), aspartate 187, and 211–213 (RSN). The Mg(2+) site is built by aspartate 248, glutamate 260, and asparagine 262. Mn(2+) contacts are provided by aspartate 248, glutamate 260, and asparagine 262.

Belongs to the RimK family. Mg(2+) serves as cofactor. Requires Mn(2+) as cofactor.

The chain is Probable alpha-L-glutamate ligase 2 from Shewanella amazonensis (strain ATCC BAA-1098 / SB2B).